Consider the following 648-residue polypeptide: Threonine--tRNA ligase (648 aa).

The TGS domain occupies 1-61 (MINITFPDGA…DTDGSIEIVT (61 aa)). Residues 242–540 (DHRKLGKELD…LIETYKGAFP (299 aa)) form a catalytic region. Zn(2+)-binding residues include Cys-336, His-387, and His-517.

Belongs to the class-II aminoacyl-tRNA synthetase family. As to quaternary structure, homodimer. The cofactor is Zn(2+).

It is found in the cytoplasm. It catalyses the reaction tRNA(Thr) + L-threonine + ATP = L-threonyl-tRNA(Thr) + AMP + diphosphate + H(+). Its function is as follows. Catalyzes the attachment of threonine to tRNA(Thr) in a two-step reaction: L-threonine is first activated by ATP to form Thr-AMP and then transferred to the acceptor end of tRNA(Thr). Also edits incorrectly charged L-seryl-tRNA(Thr). The chain is Threonine--tRNA ligase from Streptococcus uberis (strain ATCC BAA-854 / 0140J).